Consider the following 440-residue polypeptide: Thymidine phosphorylase (440 aa).

Belongs to the thymidine/pyrimidine-nucleoside phosphorylase family. As to quaternary structure, homodimer.

It catalyses the reaction thymidine + phosphate = 2-deoxy-alpha-D-ribose 1-phosphate + thymine. It participates in pyrimidine metabolism; dTMP biosynthesis via salvage pathway; dTMP from thymine: step 1/2. Its function is as follows. The enzymes which catalyze the reversible phosphorolysis of pyrimidine nucleosides are involved in the degradation of these compounds and in their utilization as carbon and energy sources, or in the rescue of pyrimidine bases for nucleotide synthesis. This Burkholderia pseudomallei (strain K96243) protein is Thymidine phosphorylase.